A 172-amino-acid chain; its full sequence is ATP synthase subunit b (172 aa).

A helical membrane pass occupies residues 11–30; that stretch reads LIAQIINFVIVLWVLNRFAF.

This sequence belongs to the ATPase B chain family. F-type ATPases have 2 components, F(1) - the catalytic core - and F(0) - the membrane proton channel. F(1) has five subunits: alpha(3), beta(3), gamma(1), delta(1), epsilon(1). F(0) has three main subunits: a(1), b(2) and c(10-14). The alpha and beta chains form an alternating ring which encloses part of the gamma chain. F(1) is attached to F(0) by a central stalk formed by the gamma and epsilon chains, while a peripheral stalk is formed by the delta and b chains.

It localises to the cell inner membrane. Functionally, f(1)F(0) ATP synthase produces ATP from ADP in the presence of a proton or sodium gradient. F-type ATPases consist of two structural domains, F(1) containing the extramembraneous catalytic core and F(0) containing the membrane proton channel, linked together by a central stalk and a peripheral stalk. During catalysis, ATP synthesis in the catalytic domain of F(1) is coupled via a rotary mechanism of the central stalk subunits to proton translocation. Its function is as follows. Component of the F(0) channel, it forms part of the peripheral stalk, linking F(1) to F(0). This Methylacidiphilum infernorum (isolate V4) (Methylokorus infernorum (strain V4)) protein is ATP synthase subunit b.